The sequence spans 631 residues: tRNA uridine 5-carboxymethylaminomethyl modification enzyme MnmG (631 aa).

FAD contacts are provided by residues 15-20 (GGGHAG), V127, and S182. 275–289 (GPRYCPSIEDKIVRF) provides a ligand contact to NAD(+). Residue Q372 coordinates FAD.

The protein belongs to the MnmG family. Homodimer. Heterotetramer of two MnmE and two MnmG subunits. The cofactor is FAD.

Its subcellular location is the cytoplasm. NAD-binding protein involved in the addition of a carboxymethylaminomethyl (cmnm) group at the wobble position (U34) of certain tRNAs, forming tRNA-cmnm(5)s(2)U34. The chain is tRNA uridine 5-carboxymethylaminomethyl modification enzyme MnmG from Buchnera aphidicola subsp. Schizaphis graminum (strain Sg).